A 119-amino-acid chain; its full sequence is Large ribosomal subunit protein bL20 (119 aa).

It belongs to the bacterial ribosomal protein bL20 family.

Binds directly to 23S ribosomal RNA and is necessary for the in vitro assembly process of the 50S ribosomal subunit. It is not involved in the protein synthesizing functions of that subunit. The sequence is that of Large ribosomal subunit protein bL20 from Treponema denticola (strain ATCC 35405 / DSM 14222 / CIP 103919 / JCM 8153 / KCTC 15104).